Here is a 303-residue protein sequence, read N- to C-terminus: UDP-3-O-acyl-N-acetylglucosamine deacetylase (303 aa).

Zn(2+) is bound by residues His78, His237, and Asp241. Catalysis depends on His264, which acts as the Proton donor.

It belongs to the LpxC family. Zn(2+) serves as cofactor.

It catalyses the reaction a UDP-3-O-[(3R)-3-hydroxyacyl]-N-acetyl-alpha-D-glucosamine + H2O = a UDP-3-O-[(3R)-3-hydroxyacyl]-alpha-D-glucosamine + acetate. Its pathway is glycolipid biosynthesis; lipid IV(A) biosynthesis; lipid IV(A) from (3R)-3-hydroxytetradecanoyl-[acyl-carrier-protein] and UDP-N-acetyl-alpha-D-glucosamine: step 2/6. In terms of biological role, catalyzes the hydrolysis of UDP-3-O-myristoyl-N-acetylglucosamine to form UDP-3-O-myristoylglucosamine and acetate, the committed step in lipid A biosynthesis. In Pseudomonas aeruginosa (strain LESB58), this protein is UDP-3-O-acyl-N-acetylglucosamine deacetylase.